The following is a 287-amino-acid chain: Hydroxyethylthiazole kinase (287 aa).

Residue M50 coordinates substrate. 2 residues coordinate ATP: R126 and S185. Position 212 (G212) interacts with substrate.

The protein belongs to the Thz kinase family. Mg(2+) serves as cofactor.

It carries out the reaction 5-(2-hydroxyethyl)-4-methylthiazole + ATP = 4-methyl-5-(2-phosphooxyethyl)-thiazole + ADP + H(+). Its pathway is cofactor biosynthesis; thiamine diphosphate biosynthesis; 4-methyl-5-(2-phosphoethyl)-thiazole from 5-(2-hydroxyethyl)-4-methylthiazole: step 1/1. Functionally, catalyzes the phosphorylation of the hydroxyl group of 4-methyl-5-beta-hydroxyethylthiazole (THZ). The protein is Hydroxyethylthiazole kinase of Methanobrevibacter smithii (strain ATCC 35061 / DSM 861 / OCM 144 / PS).